A 1219-amino-acid chain; its full sequence is Polyamine-transporting ATPase 13A3 (1219 aa).

At 1 to 28 (MDKEERKTINKGQEDEMEIHGYNLCRWK) the chain is on the cytoplasmic side. The stretch at 29 to 49 (LAMVFVGVICTGGFLLLLLYW) is an intramembrane region. At 50 to 201 (LPEWRVKATC…IAVKVPSVFK (152 aa)) the chain is on the cytoplasmic side. Residues 202–222 (LLIKEVLNPFYIFQLFSVILW) traverse the membrane as a helical segment. Over 223 to 228 (SVDEYY) the chain is Lumenal. A helical membrane pass occupies residues 229–249 (YYALAIVIMSVVSIISSLYSI). The Cytoplasmic portion of the chain corresponds to 250–405 (RKQYVMLHDM…KPTDFKLYRD (156 aa)). The helical transmembrane segment at 406–426 (AYLFLLCLVVVAGIGFIYTII) threads the bilayer. Over 427-444 (NSILNEKEVQEIIIKSLD) the chain is Lumenal. A helical transmembrane segment spans residues 445 to 465 (IITITVPPALPAAMTAGIVYA). At 466 to 936 (QRRLKKVGIF…ALMTSFCVFK (471 aa)) the chain is on the cytoplasmic side. The active-site 4-aspartylphosphate intermediate is the aspartate 494. Positions 494 and 496 each coordinate Mg(2+). Residues 494 to 496 (DKT), phenylalanine 624, arginine 680, and aspartate 746 contribute to the ATP site. Serine 813 carries the post-translational modification Phosphoserine. Aspartate 879 and aspartate 883 together coordinate Mg(2+). 879 to 883 (DGAND) is an ATP binding site. Residues 937 to 957 (FMALYSIIQYFSVTLLYSILS) form a helical membrane-spanning segment. Asparagine 958 is a topological domain (lumenal). A helical membrane pass occupies residues 959–979 (LGDFQFLFIDLAIILVVVFTM). Residues 980 to 995 (SLNPAWKELVAQRPPS) lie on the Cytoplasmic side of the membrane. A helical transmembrane segment spans residues 996-1016 (GLISGALLFSVLSQIVISVGF). Topologically, residues 1017–1066 (QSLGFFWVKQYKVCDPNSDVCNTTRSACWNSSHLYNGTELDSCKIQNYEN) are lumenal. The chain crosses the membrane as a helical span at residues 1067–1087 (TTVFFISSFQYLTVAVAFSKG). At 1088–1098 (KPFRQPCYKNY) the chain is on the cytoplasmic side. A helical membrane pass occupies residues 1099-1119 (FFVISVIILYVFILFIMLHPV). The Lumenal portion of the chain corresponds to 1120–1136 (ASVDQVLEIMCVPYQWR). The helical transmembrane segment at 1137–1157 (IYMLIIVLINAFVSITVEESV) threads the bilayer. At 1158 to 1219 (DRWGKCCLSW…NGSCQIITIA (62 aa)) the chain is on the cytoplasmic side.

Belongs to the cation transport ATPase (P-type) (TC 3.A.3) family. Type V subfamily. In terms of tissue distribution, expression is greatest in liver, followed by kidney, colon, stomach, brain and small intestine. Isoform 1 is highly expressed in the kidney while isoform 2 is highly expressed in the brain.

Its subcellular location is the recycling endosome membrane. It localises to the early endosome membrane. It is found in the late endosome membrane. The catalysed reaction is putrescine(out) + ATP + H2O = putrescine(in) + ADP + phosphate + H(+). Functionally, ATP-driven pump involved in endocytosis-dependent polyamine transport. Uses ATP as an energy source to transfer polyamine precursor putrescine from the endosomal compartment to the cytosol. The sequence is that of Polyamine-transporting ATPase 13A3 from Mus musculus (Mouse).